Here is a 745-residue protein sequence, read N- to C-terminus: Elongation factor G, mitochondrial (745 aa).

The tr-type G domain maps to 40–317 (ERIRNIGISA…AVLDYLPNPG (278 aa)). GTP is bound by residues 49 to 56 (AHIDSGKT), 116 to 120 (DTPGH), and 170 to 173 (NKLD).

The protein belongs to the TRAFAC class translation factor GTPase superfamily. Classic translation factor GTPase family. EF-G/EF-2 subfamily.

The protein localises to the mitochondrion. The protein operates within protein biosynthesis; polypeptide chain elongation. Functionally, mitochondrial GTPase that catalyzes the GTP-dependent ribosomal translocation step during translation elongation. During this step, the ribosome changes from the pre-translocational (PRE) to the post-translocational (POST) state as the newly formed A-site-bound peptidyl-tRNA and P-site-bound deacylated tRNA move to the P and E sites, respectively. Catalyzes the coordinated movement of the two tRNA molecules, the mRNA and conformational changes in the ribosome. Essential during development as it acts as a retrograde signal from mitochondria to the nucleus to slow down cell proliferation if mitochondrial energy output is low. This Drosophila yakuba (Fruit fly) protein is Elongation factor G, mitochondrial.